A 1073-amino-acid polypeptide reads, in one-letter code: Self-sufficient cytochrome P450 monooxygenase CYP505AG1 (1073 aa).

A heme-binding site is contributed by Cys-409. In terms of domain architecture, Flavodoxin-like spans Val-501–Leu-644. Residues Ser-507–Thr-511 and Val-588–Ala-620 contribute to the FMN site. Positions His-680–Pro-909 constitute an FAD-binding FR-type domain.

In the N-terminal section; belongs to the cytochrome P450 family. The cofactor is FAD. It depends on FMN as a cofactor. Heme serves as cofactor.

It carries out the reaction 2 oxidized [cytochrome P450] + NADPH = 2 reduced [cytochrome P450] + NADP(+) + H(+). The catalysed reaction is an organic molecule + reduced [NADPH--hemoprotein reductase] + O2 = an alcohol + oxidized [NADPH--hemoprotein reductase] + H2O + H(+). It catalyses the reaction dodecanoate + reduced [NADPH--hemoprotein reductase] + O2 = 10-hydroxydodecanoate + oxidized [NADPH--hemoprotein reductase] + H2O + H(+). The enzyme catalyses tetradecanoate + reduced [NADPH--hemoprotein reductase] + O2 = 12-hydroxytetradecanoate + oxidized [NADPH--hemoprotein reductase] + H2O + H(+). Functionally, self-sufficient cytochrome P450 monooxygenase that catalyzes the regioselective in-chain hydroxylation of alkanes, fatty alcohols, and fatty acids, giving sub-terminal hydroxylation by acting preferentially on the omega-2 position. Prefers fatty acids as substrates, since it hydroxylates the small amounts of dodecanoic acid formed in the presence of an excess of 1-dodecanol. In Oidiodendron maius (strain Zn), this protein is Self-sufficient cytochrome P450 monooxygenase CYP505AG1.